Reading from the N-terminus, the 155-residue chain is Regulatory protein RecX (155 aa).

It belongs to the RecX family.

It is found in the cytoplasm. Modulates RecA activity. This is Regulatory protein RecX from Pseudomonas syringae pv. tomato (strain ATCC BAA-871 / DC3000).